The primary structure comprises 82 residues: UPF0235 protein Pden_2174 (82 aa).

It belongs to the UPF0235 family.

The sequence is that of UPF0235 protein Pden_2174 from Paracoccus denitrificans (strain Pd 1222).